The primary structure comprises 231 residues: 7-cyano-7-deazaguanine synthase (231 aa).

An ATP-binding site is contributed by 8 to 18 (FSGGQDSTTCL). Cys188, Cys197, Cys200, and Cys203 together coordinate Zn(2+).

This sequence belongs to the QueC family. Requires Zn(2+) as cofactor.

It catalyses the reaction 7-carboxy-7-deazaguanine + NH4(+) + ATP = 7-cyano-7-deazaguanine + ADP + phosphate + H2O + H(+). The protein operates within purine metabolism; 7-cyano-7-deazaguanine biosynthesis. Catalyzes the ATP-dependent conversion of 7-carboxy-7-deazaguanine (CDG) to 7-cyano-7-deazaguanine (preQ(0)). In Salmonella newport (strain SL254), this protein is 7-cyano-7-deazaguanine synthase.